The primary structure comprises 54 residues: UPF0391 membrane protein Mfla_0947/Mfla_1091 (54 aa).

2 consecutive transmembrane segments (helical) span residues 6-26 (VIFF…IAAG) and 30-50 (IAKI…VAGI).

This sequence belongs to the UPF0391 family.

The protein localises to the cell membrane. This is UPF0391 membrane protein Mfla_0947/Mfla_1091 from Methylobacillus flagellatus (strain ATCC 51484 / DSM 6875 / VKM B-1610 / KT).